Consider the following 436-residue polypeptide: UDP-N-acetylglucosamine 1-carboxyvinyltransferase 1 (436 aa).

22–23 lines the phosphoenolpyruvate pocket; that stretch reads KN. Position 93 (R93) interacts with UDP-N-acetyl-alpha-D-glucosamine. Catalysis depends on C117, which acts as the Proton donor. A 2-(S-cysteinyl)pyruvic acid O-phosphothioketal modification is found at C117. UDP-N-acetyl-alpha-D-glucosamine-binding positions include 122–126, D306, and V328; that span reads RPIDQ.

Belongs to the EPSP synthase family. MurA subfamily.

The protein localises to the cytoplasm. The enzyme catalyses phosphoenolpyruvate + UDP-N-acetyl-alpha-D-glucosamine = UDP-N-acetyl-3-O-(1-carboxyvinyl)-alpha-D-glucosamine + phosphate. The protein operates within cell wall biogenesis; peptidoglycan biosynthesis. Cell wall formation. Adds enolpyruvyl to UDP-N-acetylglucosamine. The polypeptide is UDP-N-acetylglucosamine 1-carboxyvinyltransferase 1 (Bacillus licheniformis (strain ATCC 14580 / DSM 13 / JCM 2505 / CCUG 7422 / NBRC 12200 / NCIMB 9375 / NCTC 10341 / NRRL NRS-1264 / Gibson 46)).